Here is a 536-residue protein sequence, read N- to C-terminus: MAGGNTHRKKSCACCKEYLEHLGGKMRCFLRRMAADSMHSMIMPDRFVSHFGGKIPGTIKLESPNGILYVVEVTECMNKTLLQCGWEAFVDAHNIKEGESLLFRHIENSRYEVLILDSDDCEKVFSCAGIRNGSCVQDKTVDPVDSSGSSSNDTTQSSRSRNTENLTAMCSSSEKSGEDSPSGYEFHESVEPQTPSGSDYVLSRRTYLSEAQKERVVTHIQDIQPEITVFVAVMKKCNLQSPAPYLVISSRYASVHFPRETATITLQRPSKRKKWYPRFYKRIDKSDHMLRGQWQNFVHDNCLQEEDICLFVPTKGGRNFAFTVHLLQAEVTHSRDGTDVHKIGSSQNKRNSKMASQVHIKEAPGGDVSSESNKHGVSHESLESEDSDGPSEPPYISSMRRRLSQLQKKTVEEKVRAIQSEIPICVATISKLAGSGGKGKFRGLELSSRYAASYLPDKNHQTLVLQCKGMIWQINLVVRRRYTKGKRWFLTAGWRKFAHDNRLRVGDFCLFELKKKKKLTMEVHIISNLQRYPEVE.

Positions 26-119 (MRCFLRRMAA…RYEVLILDSD (94 aa)) form a DNA-binding region, TF-B3 1. The disordered stretch occupies residues 138–199 (DKTVDPVDSS…VEPQTPSGSD (62 aa)). Composition is skewed to low complexity over residues 145–160 (DSSG…SSRS) and 171–183 (SSSE…SPSG). The segment at residues 231–330 (VAVMKKCNLQ…AFTVHLLQAE (100 aa)) is a DNA-binding region (TF-B3 2). Positions 335-396 (RDGTDVHKIG…SDGPSEPPYI (62 aa)) are disordered. A compositionally biased stretch (polar residues) spans 344 to 355 (GSSQNKRNSKMA). Residues 372–382 (SNKHGVSHESL) show a composition bias toward basic and acidic residues. The segment at residues 429–529 (ISKLAGSGGK…TMEVHIISNL (101 aa)) is a DNA-binding region (TF-B3 3).

The protein resides in the nucleus. This Oryza sativa subsp. japonica (Rice) protein is B3 domain-containing protein Os03g0619800.